The primary structure comprises 451 residues: Phosphoglucosamine mutase (451 aa).

S101 acts as the Phosphoserine intermediate in catalysis. Residues S101, D241, D243, and D245 each coordinate Mg(2+). S101 is subject to Phosphoserine.

This sequence belongs to the phosphohexose mutase family. It depends on Mg(2+) as a cofactor. Activated by phosphorylation.

It carries out the reaction alpha-D-glucosamine 1-phosphate = D-glucosamine 6-phosphate. Functionally, catalyzes the conversion of glucosamine-6-phosphate to glucosamine-1-phosphate. In Exiguobacterium sibiricum (strain DSM 17290 / CCUG 55495 / CIP 109462 / JCM 13490 / 255-15), this protein is Phosphoglucosamine mutase.